A 152-amino-acid polypeptide reads, in one-letter code: MQLTELIETTVTGLGYELVELERTGRGMLCIYIDQPAGISLEDCEKVTRQLQHVLTVENIDYERLEVSSPGLDRPLKKLADFERFAGSEVSVTLKKPLDGRKTYRGILHAPNGETIGLEFEGKKGEAAMLDFTLADIDKARLIPQVDFRSRK.

Belongs to the RimP family.

Its subcellular location is the cytoplasm. Functionally, required for maturation of 30S ribosomal subunits. This is Ribosome maturation factor RimP from Burkholderia orbicola (strain MC0-3).